The following is a 332-amino-acid chain: Glycerol-3-phosphate dehydrogenase [NAD(P)+] (332 aa).

Positions 10, 11, 31, and 105 each coordinate NADPH. 3 residues coordinate sn-glycerol 3-phosphate: K105, G136, and S138. A140 contributes to the NADPH binding site. Positions 191, 244, 254, 255, and 256 each coordinate sn-glycerol 3-phosphate. The active-site Proton acceptor is K191. R255 provides a ligand contact to NADPH. NADPH is bound by residues V279 and E281.

It belongs to the NAD-dependent glycerol-3-phosphate dehydrogenase family.

The protein localises to the cytoplasm. The enzyme catalyses sn-glycerol 3-phosphate + NAD(+) = dihydroxyacetone phosphate + NADH + H(+). The catalysed reaction is sn-glycerol 3-phosphate + NADP(+) = dihydroxyacetone phosphate + NADPH + H(+). It functions in the pathway membrane lipid metabolism; glycerophospholipid metabolism. Its function is as follows. Catalyzes the reduction of the glycolytic intermediate dihydroxyacetone phosphate (DHAP) to sn-glycerol 3-phosphate (G3P), the key precursor for phospholipid synthesis. This is Glycerol-3-phosphate dehydrogenase [NAD(P)+] from Anaeromyxobacter dehalogenans (strain 2CP-C).